Reading from the N-terminus, the 275-residue chain is Nitrogenase iron protein 1 (275 aa).

9–16 (GKGGIGKS) lines the ATP pocket. [4Fe-4S] cluster is bound at residue cysteine 97. Arginine 100 carries the post-translational modification ADP-ribosylarginine; by dinitrogenase reductase ADP-ribosyltransferase. Cysteine 132 contacts [4Fe-4S] cluster.

This sequence belongs to the NifH/BchL/ChlL family. Homodimer. [4Fe-4S] cluster serves as cofactor. The reversible ADP-ribosylation of Arg-100 inactivates the nitrogenase reductase and regulates nitrogenase activity.

It catalyses the reaction N2 + 8 reduced [2Fe-2S]-[ferredoxin] + 16 ATP + 16 H2O = H2 + 8 oxidized [2Fe-2S]-[ferredoxin] + 2 NH4(+) + 16 ADP + 16 phosphate + 6 H(+). In terms of biological role, the key enzymatic reactions in nitrogen fixation are catalyzed by the nitrogenase complex, which has 2 components: the iron protein and the molybdenum-iron protein. The chain is Nitrogenase iron protein 1 (nifH1) from Methanothermobacter thermautotrophicus (strain ATCC 29096 / DSM 1053 / JCM 10044 / NBRC 100330 / Delta H) (Methanobacterium thermoautotrophicum).